We begin with the raw amino-acid sequence, 119 residues long: Large ribosomal subunit protein bL20 (119 aa).

This sequence belongs to the bacterial ribosomal protein bL20 family.

Binds directly to 23S ribosomal RNA and is necessary for the in vitro assembly process of the 50S ribosomal subunit. It is not involved in the protein synthesizing functions of that subunit. The polypeptide is Large ribosomal subunit protein bL20 (Thiobacillus denitrificans (strain ATCC 25259 / T1)).